The chain runs to 266 residues: Mitochondrial import inner membrane translocase subunit Tim29 (266 aa).

The N-terminal 37 residues, 1–37 (MVTAALKRFWSGGHGEAGGEAGGATTVAVKPGLWTRL), are a transit peptide targeting the mitochondrion. The Mitochondrial matrix portion of the chain corresponds to 38–65 (STWAGALLRDYAEACGDAAAAARARPGR). The helical transmembrane segment at 66-83 (AALYVGLLGGAAACCALA) threads the bilayer. Residues 84–266 (PSEAAFEEAL…DSLVQSDVSR (183 aa)) lie on the Mitochondrial intermembrane side of the membrane.

In terms of assembly, component of the TIM22 complex, which core is composed of TIMM22, associated with TIMM10 (TIMM10A and/or TIMM10B), TIMM9, AGK and TIMM29. Interacts with TIMM10B; the interaction is direct. Interacts with TOMM40; linking the TIM22 complex to the TOM complex. Interacts with TIMM22 (when oxidized); the interaction is direct.

It is found in the mitochondrion inner membrane. Component of the TIM22 complex, a complex that mediates the import and insertion of multi-pass transmembrane proteins into the mitochondrial inner membrane. The TIM22 complex forms a twin-pore translocase that uses the membrane potential as the external driving force. Required for the stability of the TIM22 complex and functions in the assembly of the TIMM22 protein into the TIM22 complex. May facilitate cooperation between TIM22 and TOM complexes by interacting with TOMM40. This is Mitochondrial import inner membrane translocase subunit Tim29 (Timm29) from Mus musculus (Mouse).